The chain runs to 467 residues: Fumarate hydratase class II (467 aa).

Substrate-binding positions include 98 to 100 (SGT), R126, 129 to 132 (HPND), 139 to 141 (SSN), and T187. H188 acts as the Proton donor/acceptor in catalysis. Residue S318 is part of the active site. Substrate-binding positions include S319 and 324–326 (KVN).

It belongs to the class-II fumarase/aspartase family. Fumarase subfamily. As to quaternary structure, homotetramer.

The protein resides in the cytoplasm. It carries out the reaction (S)-malate = fumarate + H2O. It functions in the pathway carbohydrate metabolism; tricarboxylic acid cycle; (S)-malate from fumarate: step 1/1. In terms of biological role, involved in the TCA cycle. Catalyzes the stereospecific interconversion of fumarate to L-malate. This chain is Fumarate hydratase class II, found in Salmonella typhimurium (strain LT2 / SGSC1412 / ATCC 700720).